Reading from the N-terminus, the 245-residue chain is Exosome complex component RRP41 (245 aa).

N-acetylalanine is present on Ala-2.

The protein belongs to the RNase PH family. In terms of assembly, component of the RNA exosome core complex (Exo-9), composed of EXOSC1, EXOSC2, EXOSC3, EXOSC4, EXOSC5, EXOSC6, EXOSC7, EXOSC8 and EXOSC9; within the complex interacts with EXOSC2, EXOSC7 and EXOSC9. The catalytically inactive RNA exosome core complex (Exo-9) associates with the catalytic subunit EXOSC10/RRP6. Exo-9 may associate with DIS3 to form the nucleolar exosome complex, or DIS3L to form the cytoplasmic exosome complex. Exo-9 is formed by a hexameric base ring consisting of the heterodimers EXOSC4-EXOSC9, EXOSC5-EXOSC8 and EXOSC6-EXOSC7, and a cap ring consisting of EXOSC1, EXOSC2 and EXOSC3. The RNA exosome complex associates with cofactors C1D/RRP47, MPHOSPH6/MPP6 and MTREX/MTR4. Interacts with DDX60. Interacts with DIS3; the interaction is direct.

The protein resides in the cytoplasm. Its subcellular location is the nucleus. It localises to the nucleolus. It is found in the nucleoplasm. Non-catalytic component of the RNA exosome complex which has 3'-&gt;5' exoribonuclease activity and participates in a multitude of cellular RNA processing and degradation events. In the nucleus, the RNA exosome complex is involved in proper maturation of stable RNA species such as rRNA, snRNA and snoRNA, in the elimination of RNA processing by-products and non-coding 'pervasive' transcripts, such as antisense RNA species and promoter-upstream transcripts (PROMPTs), and of mRNAs with processing defects, thereby limiting or excluding their export to the cytoplasm. The RNA exosome may be involved in Ig class switch recombination (CSR) and/or Ig variable region somatic hypermutation (SHM) by targeting AICDA deamination activity to transcribed dsDNA substrates. In the cytoplasm, the RNA exosome complex is involved in general mRNA turnover and specifically degrades inherently unstable mRNAs containing AU-rich elements (AREs) within their 3' untranslated regions, and in RNA surveillance pathways, preventing translation of aberrant mRNAs. It seems to be involved in degradation of histone mRNA. The catalytic inactive RNA exosome core complex of 9 subunits (Exo-9) is proposed to play a pivotal role in the binding and presentation of RNA for ribonucleolysis, and to serve as a scaffold for the association with catalytic subunits and accessory proteins or complexes. EXOSC4 binds to ARE-containing RNAs. This Bos taurus (Bovine) protein is Exosome complex component RRP41 (EXOSC4).